We begin with the raw amino-acid sequence, 601 residues long: UBA domain-containing protein 3 (601 aa).

Positions Glu7–Asn129 constitute an Arf-GAP domain. Disordered stretches follow at residues Asp123–Tyr158 and Glu289–Gly310. The span at Thr139 to Ser156 shows a compositional bias: low complexity. Residues Arg157 to His197 enclose the UBA domain.

This Schizosaccharomyces pombe (strain 972 / ATCC 24843) (Fission yeast) protein is UBA domain-containing protein 3 (ucp3).